Reading from the N-terminus, the 94-residue chain is ESAT-6-like protein EsxI (94 aa).

The protein belongs to the WXG100 family. ESAT-6 subfamily.

It is found in the secreted. This is ESAT-6-like protein EsxI from Mycobacterium bovis (strain ATCC BAA-935 / AF2122/97).